Reading from the N-terminus, the 26-residue chain is uncharacterized protein (26 aa).

Its subcellular location is the plastid. The protein resides in the chloroplast. This is an uncharacterized protein from Trieres chinensis (Marine centric diatom).